The primary structure comprises 654 residues: tRNA uridine 5-carboxymethylaminomethyl modification enzyme MnmG (654 aa).

17 to 22 is an FAD binding site; sequence GGGHAG. Position 289–303 (289–303) interacts with NAD(+); it reads GPRYCPSIEDKIVKF.

Belongs to the MnmG family. As to quaternary structure, homodimer. Heterotetramer of two MnmE and two MnmG subunits. The cofactor is FAD.

The protein resides in the cytoplasm. Its function is as follows. NAD-binding protein involved in the addition of a carboxymethylaminomethyl (cmnm) group at the wobble position (U34) of certain tRNAs, forming tRNA-cmnm(5)s(2)U34. In Prochlorococcus marinus subsp. pastoris (strain CCMP1986 / NIES-2087 / MED4), this protein is tRNA uridine 5-carboxymethylaminomethyl modification enzyme MnmG.